Reading from the N-terminus, the 236-residue chain is 2-C-methyl-D-erythritol 4-phosphate cytidylyltransferase (236 aa).

It belongs to the IspD/TarI cytidylyltransferase family. IspD subfamily. As to quaternary structure, homodimer.

It carries out the reaction 2-C-methyl-D-erythritol 4-phosphate + CTP + H(+) = 4-CDP-2-C-methyl-D-erythritol + diphosphate. It functions in the pathway isoprenoid biosynthesis; isopentenyl diphosphate biosynthesis via DXP pathway; isopentenyl diphosphate from 1-deoxy-D-xylulose 5-phosphate: step 2/6. Its function is as follows. Catalyzes the formation of 4-diphosphocytidyl-2-C-methyl-D-erythritol from CTP and 2-C-methyl-D-erythritol 4-phosphate (MEP). The sequence is that of 2-C-methyl-D-erythritol 4-phosphate cytidylyltransferase from Buchnera aphidicola subsp. Schizaphis graminum (strain Sg).